The primary structure comprises 271 residues: Virulence regulon transcriptional activator VirF (271 aa).

The region spanning 167–265 (ERLQKFMEEN…GCTPSQARLT (99 aa)) is the HTH araC/xylS-type domain. 2 DNA-binding regions (H-T-H motif) span residues 184 to 205 (SKFAREFGMGLTTFKELFGTVY) and 232 to 255 (IVDIAMEAGFSSQSYFTQSYRRRF).

Its function is as follows. Transcriptional activator of the Yersinia virulence regulon. This is Virulence regulon transcriptional activator VirF (virF) from Yersinia enterocolitica serotype O:8 / biotype 1B (strain NCTC 13174 / 8081).